We begin with the raw amino-acid sequence, 349 residues long: 5-deoxyribose 1-phosphate isomerase (349 aa).

Residues 49 to 51, R92, and Q199 each bind substrate; that span reads RGA. Catalysis depends on D240, which acts as the Proton donor. 250 to 251 lines the substrate pocket; that stretch reads NK.

It belongs to the EIF-2B alpha/beta/delta subunits family. DrdI subfamily.

The enzyme catalyses 5-deoxy-alpha-D-ribose 1-phosphate = 5-deoxy-D-ribulose 1-phosphate. It participates in carbohydrate degradation. In terms of biological role, catalyzes the isomerization of 5-deoxy-alpha-D-ribose 1-phosphate to 5-deoxy-D-ribulose 1-phosphate, as part of a 5-deoxyribose salvage pathway that recycles this toxic radical SAM enzyme by-product to mainstream metabolites. The sequence is that of 5-deoxyribose 1-phosphate isomerase from Clostridium botulinum (strain Okra / Type B1).